Consider the following 139-residue polypeptide: Actin-depolymerizing factor 1 (139 aa).

The ADF-H domain maps to 5 to 139; the sequence is ASGMAVHDDC…DLDVFRSRAN (135 aa). Phosphoserine; by CPK3 is present on Ser6.

Belongs to the actin-binding proteins ADF family. Interacts with the 14-3-3-like protein GRF6/AFT1. Phosphorylation at Ser-6 by CPK3/CDPK6 inhibits actin-depolimerizing activity. In terms of tissue distribution, expressed in vascular tissues of all organs.

The protein resides in the cytoplasm. It localises to the cytoskeleton. In terms of biological role, actin-depolymerizing protein. Stimulates F-actin depolymerization. Involved in plant development, cell organ expansion and flowering by controlling breakdown of thick actin cables. Severs actin filaments or bundles and promotes actin cytoskeleton disassembly. Binds monomeric actin (G-actin) with a marked preference for the ADP-loaded form and inhibits the rate of nucleotide exchange on G-actin. This chain is Actin-depolymerizing factor 1 (ADF1), found in Arabidopsis thaliana (Mouse-ear cress).